The sequence spans 122 residues: EPIDERMAL PATTERNING FACTOR-like protein 1 (122 aa).

The N-terminal stretch at 1 to 26 (MFAIYKSTLLLLPLILILLITPQVSS) is a signal peptide. 3 disulfide bridges follow: Cys55–Cys113, Cys59–Cys65, and Cys62–Cys115.

The protein belongs to the plant cysteine rich small secretory peptide family. Epidermal patterning factor subfamily.

The protein localises to the secreted. Controls stomatal patterning. The polypeptide is EPIDERMAL PATTERNING FACTOR-like protein 1 (Arabidopsis thaliana (Mouse-ear cress)).